The sequence spans 340 residues: HTH-type transcriptional regulator GalS (340 aa).

The HTH lacI-type domain maps to 1–56; the sequence is MITIRDVARQAGVSVATVSRVLNNSALVSPDTRDAVMQAVTLLGYRPNANAQALAT. The segment at residues 4-23 is a DNA-binding region (H-T-H motif); that stretch reads IRDVARQAGVSVATVSRVLN.

As to quaternary structure, homodimer.

Repressor of the mgl operon. Binds galactose and D-fucose as inducers. GalS binds to an operator DNA sequence within its own coding sequence. This chain is HTH-type transcriptional regulator GalS (galS), found in Salmonella typhimurium (strain LT2 / SGSC1412 / ATCC 700720).